The following is a 430-amino-acid chain: MAKISRIIGREILDSRGNPTVEADVYLESGAMGRAAAPSGASTGSREALELRDGDKSRYLGKGVTKAVAAINDTISPALLGKDALAQADIDGIMIDLDGTENKETLGANAILAVSLAVAKAAAAEKGVALYEHIADLNGTSGQYSMPVPMMNIINGGEHADNNVDIQEFMVQPVGAKSFKEALRMGAEIFHALKKVLSAKGLNTAVGDEGGFAPNLSSNAEALAVIVEAVENAGYKMNEDITLALDCAASEFYKEGKYVLSGEDKSFDSEAFGDYLADLSAQYPIVSIEDGLDESDWDGWASLTKKIGDKVQLVGDDLFVTNTKILKRGIDNGIGNSILIKFNQIGSLTETLNAIKMAKDAGFTAVISHRSGETEDATIADLAVGTAAGQIKTGSLCRSDRVAKYNQLLRIEEALGDAATYKGRSEIKGQ.

Residue Gln167 coordinates (2R)-2-phosphoglycerate. The Proton donor role is filled by Glu209. Mg(2+)-binding residues include Asp246, Glu289, and Asp316. (2R)-2-phosphoglycerate-binding residues include Lys341, Arg370, Ser371, and Lys392. Lys341 serves as the catalytic Proton acceptor.

The protein belongs to the enolase family. As to quaternary structure, component of the RNA degradosome, a multiprotein complex involved in RNA processing and mRNA degradation. Mg(2+) serves as cofactor.

It is found in the cytoplasm. It localises to the secreted. The protein localises to the cell surface. It carries out the reaction (2R)-2-phosphoglycerate = phosphoenolpyruvate + H2O. It participates in carbohydrate degradation; glycolysis; pyruvate from D-glyceraldehyde 3-phosphate: step 4/5. Catalyzes the reversible conversion of 2-phosphoglycerate (2-PG) into phosphoenolpyruvate (PEP). It is essential for the degradation of carbohydrates via glycolysis. This chain is Enolase, found in Alteromonas mediterranea (strain DSM 17117 / CIP 110805 / LMG 28347 / Deep ecotype).